Here is a 196-residue protein sequence, read N- to C-terminus: Carnitine operon protein CaiE (196 aa).

The disordered stretch occupies residues 177–196 (RQMEENRPRLQGTTDVMPKR).

The protein belongs to the transferase hexapeptide repeat family.

The protein operates within amine and polyamine metabolism; carnitine metabolism. In terms of biological role, overproduction of CaiE stimulates the activity of CaiB and CaiD. This chain is Carnitine operon protein CaiE, found in Escherichia coli O17:K52:H18 (strain UMN026 / ExPEC).